We begin with the raw amino-acid sequence, 255 residues long: ATP synthase subunit a (255 aa).

6 helical membrane passes run threonine 40–valine 60, leucine 109–valine 129, asparagine 135–leucine 155, valine 163–isoleucine 183, leucine 196–valine 218, and isoleucine 230–glutamate 250.

Belongs to the ATPase A chain family. In terms of assembly, F-type ATPases have 2 components, CF(1) - the catalytic core - and CF(0) - the membrane proton channel. CF(1) has five subunits: alpha(3), beta(3), gamma(1), delta(1), epsilon(1). CF(0) has three main subunits: a(1), b(2) and c(9-12). The alpha and beta chains form an alternating ring which encloses part of the gamma chain. CF(1) is attached to CF(0) by a central stalk formed by the gamma and epsilon chains, while a peripheral stalk is formed by the delta and b chains.

It is found in the cell inner membrane. In terms of biological role, key component of the proton channel; it plays a direct role in the translocation of protons across the membrane. The polypeptide is ATP synthase subunit a (Sorangium cellulosum (strain So ce56) (Polyangium cellulosum (strain So ce56))).